A 414-amino-acid polypeptide reads, in one-letter code: Gamma-glutamyl phosphate reductase (414 aa).

Belongs to the gamma-glutamyl phosphate reductase family.

The protein resides in the cytoplasm. It catalyses the reaction L-glutamate 5-semialdehyde + phosphate + NADP(+) = L-glutamyl 5-phosphate + NADPH + H(+). Its pathway is amino-acid biosynthesis; L-proline biosynthesis; L-glutamate 5-semialdehyde from L-glutamate: step 2/2. In terms of biological role, catalyzes the NADPH-dependent reduction of L-glutamate 5-phosphate into L-glutamate 5-semialdehyde and phosphate. The product spontaneously undergoes cyclization to form 1-pyrroline-5-carboxylate. This chain is Gamma-glutamyl phosphate reductase, found in Alkaliphilus metalliredigens (strain QYMF).